The following is a 444-amino-acid chain: Phosphoglucosamine mutase (444 aa).

The Phosphoserine intermediate role is filled by Ser-104. Mg(2+)-binding residues include Ser-104, Asp-243, Asp-245, and Asp-247. Ser-104 is subject to Phosphoserine.

Belongs to the phosphohexose mutase family. Mg(2+) is required as a cofactor. Activated by phosphorylation.

It carries out the reaction alpha-D-glucosamine 1-phosphate = D-glucosamine 6-phosphate. Catalyzes the conversion of glucosamine-6-phosphate to glucosamine-1-phosphate. This is Phosphoglucosamine mutase from Neisseria meningitidis serogroup B (strain ATCC BAA-335 / MC58).